The primary structure comprises 249 residues: Anamorsin homolog (249 aa).

The interval 1–130 (MEQFKDLQKS…ETGSAARLSF (130 aa)) is N-terminal SAM-like domain. The interval 131–161 (AKKAAGVNVWKISGDDEELIDEEDLLDEADK) is linker. [2Fe-2S] cluster-binding residues include Cys172, Cys181, Cys184, and Cys186. The interval 172-186 (CSTTGKRKACKNCSC) is fe-S binding site A. Positions 210, 213, 221, and 224 each coordinate [4Fe-4S] cluster. 2 consecutive short sequence motifs (cx2C motif) follow at residues 210 to 213 (CGNC) and 221 to 224 (CSTC). Residues 210-224 (CGNCYLGDAFRCSTC) form a fe-S binding site B region.

The protein belongs to the anamorsin family. Monomer. It depends on [2Fe-2S] cluster as a cofactor. [4Fe-4S] cluster serves as cofactor.

It is found in the cytoplasm. It localises to the mitochondrion intermembrane space. Functionally, component of the cytosolic iron-sulfur (Fe-S) protein assembly (CIA) machinery. Required for the maturation of extramitochondrial Fe-S proteins. Part of an electron transfer chain functioning in an early step of cytosolic Fe-S biogenesis, facilitating the de novo assembly of a [4Fe-4S] cluster on the cytosolic Fe-S scaffold complex. Electrons are transferred from NADPH via a FAD- and FMN-containing diflavin oxidoreductase. Together with the diflavin oxidoreductase, also required for the assembly of the diferric tyrosyl radical cofactor of ribonucleotide reductase (RNR), probably by providing electrons for reduction during radical cofactor maturation in the catalytic small subunit. The polypeptide is Anamorsin homolog (Drosophila grimshawi (Hawaiian fruit fly)).